The following is a 492-amino-acid chain: N-succinylglutamate 5-semialdehyde dehydrogenase (492 aa).

Residue G220 to G225 participates in NAD(+) binding. Catalysis depends on residues E243 and C277.

It belongs to the aldehyde dehydrogenase family. AstD subfamily.

The enzyme catalyses N-succinyl-L-glutamate 5-semialdehyde + NAD(+) + H2O = N-succinyl-L-glutamate + NADH + 2 H(+). It functions in the pathway amino-acid degradation; L-arginine degradation via AST pathway; L-glutamate and succinate from L-arginine: step 4/5. Catalyzes the NAD-dependent reduction of succinylglutamate semialdehyde into succinylglutamate. The protein is N-succinylglutamate 5-semialdehyde dehydrogenase of Shigella boydii serotype 4 (strain Sb227).